The following is a 383-amino-acid chain: Acetylornithine deacetylase (383 aa).

His-80 is a binding site for Zn(2+). Asp-82 is a catalytic residue. Residue Asp-112 participates in Zn(2+) binding. Residue Glu-144 is part of the active site. Positions 145, 169, and 355 each coordinate Zn(2+).

The protein belongs to the peptidase M20A family. ArgE subfamily. Homodimer. Zn(2+) serves as cofactor. Co(2+) is required as a cofactor. The cofactor is glutathione.

The protein localises to the cytoplasm. It catalyses the reaction N(2)-acetyl-L-ornithine + H2O = L-ornithine + acetate. It participates in amino-acid biosynthesis; L-arginine biosynthesis; L-ornithine from N(2)-acetyl-L-ornithine (linear): step 1/1. Its function is as follows. Catalyzes the hydrolysis of the amide bond of N(2)-acetylated L-amino acids. Cleaves the acetyl group from N-acetyl-L-ornithine to form L-ornithine, an intermediate in L-arginine biosynthesis pathway, and a branchpoint in the synthesis of polyamines. The sequence is that of Acetylornithine deacetylase from Salmonella heidelberg (strain SL476).